Consider the following 462-residue polypeptide: Argininosuccinate lyase (462 aa).

It belongs to the lyase 1 family. Argininosuccinate lyase subfamily.

Its subcellular location is the cytoplasm. The enzyme catalyses 2-(N(omega)-L-arginino)succinate = fumarate + L-arginine. Its pathway is amino-acid biosynthesis; L-arginine biosynthesis; L-arginine from L-ornithine and carbamoyl phosphate: step 3/3. The chain is Argininosuccinate lyase from Bacillus cereus (strain B4264).